The chain runs to 263 residues: Tryptophan 2,3-dioxygenase (263 aa).

Substrate contacts are provided by residues 32–36 (FIVIH), Tyr-94, and Arg-98. His-221 is a binding site for heme. Thr-235 is a substrate binding site.

This sequence belongs to the tryptophan 2,3-dioxygenase family. In terms of assembly, homotetramer. Heme serves as cofactor.

It carries out the reaction L-tryptophan + O2 = N-formyl-L-kynurenine. It participates in amino-acid degradation; L-tryptophan degradation via kynurenine pathway; L-kynurenine from L-tryptophan: step 1/2. In terms of biological role, heme-dependent dioxygenase that catalyzes the oxidative cleavage of the L-tryptophan (L-Trp) pyrrole ring and converts L-tryptophan to N-formyl-L-kynurenine. Catalyzes the oxidative cleavage of the indole moiety. In Caulobacter vibrioides (strain ATCC 19089 / CIP 103742 / CB 15) (Caulobacter crescentus), this protein is Tryptophan 2,3-dioxygenase.